The primary structure comprises 404 residues: Serine palmitoyltransferase (404 aa).

Pyridoxal 5'-phosphate contacts are provided by residues 112–113 (GY), Ser185, His213, and Thr241. An N6-(pyridoxal phosphate)lysine modification is found at Lys244.

Belongs to the class-II pyridoxal-phosphate-dependent aminotransferase family. The cofactor is pyridoxal 5'-phosphate.

The protein localises to the cytoplasm. The catalysed reaction is L-serine + hexadecanoyl-CoA + H(+) = 3-oxosphinganine + CO2 + CoA. It participates in lipid metabolism; sphingolipid metabolism. In terms of biological role, involved in de novo bacterial ceramide synthesis. Catalyzes the condensation of L-serine with palmitoyl-CoA (hexadecanoyl-CoA) to produce 3-oxosphinganine. Can also condense serine and C16:1-CoA, but shows a preference for palmitoyl-CoA. This Caulobacter vibrioides (strain NA1000 / CB15N) (Caulobacter crescentus) protein is Serine palmitoyltransferase.